Reading from the N-terminus, the 526-residue chain is Bifunctional purine biosynthesis protein PurH (526 aa).

Residues 1–145 (MSKAPLALLS…KNHAHVGIVT (145 aa)) form the MGS-like domain.

The protein belongs to the PurH family.

The catalysed reaction is (6R)-10-formyltetrahydrofolate + 5-amino-1-(5-phospho-beta-D-ribosyl)imidazole-4-carboxamide = 5-formamido-1-(5-phospho-D-ribosyl)imidazole-4-carboxamide + (6S)-5,6,7,8-tetrahydrofolate. The enzyme catalyses IMP + H2O = 5-formamido-1-(5-phospho-D-ribosyl)imidazole-4-carboxamide. It functions in the pathway purine metabolism; IMP biosynthesis via de novo pathway; 5-formamido-1-(5-phospho-D-ribosyl)imidazole-4-carboxamide from 5-amino-1-(5-phospho-D-ribosyl)imidazole-4-carboxamide (10-formyl THF route): step 1/1. The protein operates within purine metabolism; IMP biosynthesis via de novo pathway; IMP from 5-formamido-1-(5-phospho-D-ribosyl)imidazole-4-carboxamide: step 1/1. The protein is Bifunctional purine biosynthesis protein PurH of Psychrobacter cryohalolentis (strain ATCC BAA-1226 / DSM 17306 / VKM B-2378 / K5).